Consider the following 101-residue polypeptide: Small ribosomal subunit protein uS14 (101 aa).

This sequence belongs to the universal ribosomal protein uS14 family. In terms of assembly, part of the 30S ribosomal subunit. Contacts proteins S3 and S10.

Its function is as follows. Binds 16S rRNA, required for the assembly of 30S particles and may also be responsible for determining the conformation of the 16S rRNA at the A site. This is Small ribosomal subunit protein uS14 from Ehrlichia chaffeensis (strain ATCC CRL-10679 / Arkansas).